The following is a 732-amino-acid chain: Probable zinc transporter cis4 (732 aa).

12 helical membrane passes run 52–72, 79–99, 111–131, 163–183, 189–209, 219–239, 240–260, 268–288, 350–370, 380–400, 415–435, and 453–473; these read ETLGWFSVICAFSITGSGLEV, FYLIFGIFAFVSFTTQYLGIY, VIIASLSMVFITLGAFVLGTL, YIAFPICLFVINHILILLGYF, VFYASVFYILLGVFIRVFYLV, LAFLFSSIVVACLIQFNVLPL, GTINLSVTRFTILCFMQIFCI, IQFYLGKFDISLIMALISAII, IFYFFLLNVSYMFVQVIYGLW, AIHMAFDCIAILVGLVATTLA, IEALSGFTNGIFLVLISFSIV, and LLLVSFLGLVVNLVGILAFNH. Residues 526–547 form a disordered region; the sequence is HVSQHEHTHENSQEHHHEHNHN. The next 2 helical transmembrane spans lie at 586–606 and 615–635; these read IFLHIIADTMGSVGVIVSTIL and FDPLASLIIAALIFVSVLPLI.

Belongs to the cation diffusion facilitator (CDF) transporter (TC 2.A.4) family. SLC30A subfamily. In terms of assembly, interacts with zrg17.

The protein localises to the endoplasmic reticulum membrane. Its subcellular location is the golgi apparatus. The protein resides in the cis-Golgi network membrane. In terms of biological role, probable zinc transporter involved in Golgi membrane trafficking through the regulation of zinc homeostasis. The protein is Probable zinc transporter cis4 (cis4) of Schizosaccharomyces pombe (strain 972 / ATCC 24843) (Fission yeast).